The chain runs to 291 residues: Pirin (291 aa).

Fe cation-binding residues include H56, H58, H101, and E103.

Belongs to the pirin family. May interact with NF1/CTF1. Interacts with BCL3. Identified in a complex comprised of PIR, BLC3, NFKB1 and target DNA. It depends on Fe cation as a cofactor.

The protein resides in the nucleus. The protein localises to the cytoplasm. The catalysed reaction is quercetin + O2 = 2-(3,4-dihydroxybenzoyloxy)-4,6-dihydroxybenzoate + CO. It participates in flavonoid metabolism; quercetin degradation. Transcriptional coregulator of NF-kappa-B which facilitates binding of NF-kappa-B proteins to target kappa-B genes in a redox-state-dependent manner. May be required for efficient terminal myeloid maturation of hematopoietic cells. Has quercetin 2,3-dioxygenase activity (in vitro). In Rattus norvegicus (Rat), this protein is Pirin (Pir).